Consider the following 590-residue polypeptide: V-type ATP synthase alpha chain (590 aa).

231–238 (GPFGSGKT) lines the ATP pocket.

It belongs to the ATPase alpha/beta chains family.

The enzyme catalyses ATP + H2O + 4 H(+)(in) = ADP + phosphate + 5 H(+)(out). Its function is as follows. Produces ATP from ADP in the presence of a proton gradient across the membrane. The V-type alpha chain is a catalytic subunit. In Clostridium botulinum (strain Langeland / NCTC 10281 / Type F), this protein is V-type ATP synthase alpha chain.